A 23-amino-acid polypeptide reads, in one-letter code: Defensin-like protein 2 (23 aa).

A Pyrrolidone carboxylic acid modification is found at glutamine 1.

Belongs to the DEFL family. As to quaternary structure, forms oligomers in its native state.

Functionally, possesses antifungal activity sensitive to inorganic cations. The protein is Defensin-like protein 2 of Brassica napus (Rape).